The chain runs to 314 residues: R2-like ligand binding oxidase (314 aa).

Positions 68, 101, and 104 each coordinate Mn(2+). The segment at residues 71–162 (VTEDIQPFMS…AAQVRASVTY (92 aa)) is a cross-link (3-(O4'-tyrosyl)-valine (Val-Tyr)). Residue Glu-101 participates in Fe cation binding. Fe cation-binding residues include Glu-167, Glu-202, and His-205.

The protein belongs to the ribonucleoside diphosphate reductase small chain family. R2-like ligand binding oxidase subfamily. As to quaternary structure, homodimer. Fe cation is required as a cofactor. It depends on Mn(2+) as a cofactor.

In terms of biological role, probable oxidase that might be involved in lipid metabolism. The protein is R2-like ligand binding oxidase of Mycobacterium bovis (strain ATCC BAA-935 / AF2122/97).